Consider the following 337-residue polypeptide: Anthranilate phosphoribosyltransferase (337 aa).

5-phospho-alpha-D-ribose 1-diphosphate-binding positions include Gly-80, 83-84 (GD), Thr-88, 90-93 (NIST), 108-116 (KHGNRAVSS), and Ser-120. Gly-80 provides a ligand contact to anthranilate. Ser-92 contacts Mg(2+). Asn-111 is a binding site for anthranilate. Arg-166 is a binding site for anthranilate. Mg(2+)-binding residues include Asp-224 and Glu-225.

Belongs to the anthranilate phosphoribosyltransferase family. Homodimer. Mg(2+) is required as a cofactor.

It catalyses the reaction N-(5-phospho-beta-D-ribosyl)anthranilate + diphosphate = 5-phospho-alpha-D-ribose 1-diphosphate + anthranilate. It functions in the pathway amino-acid biosynthesis; L-tryptophan biosynthesis; L-tryptophan from chorismate: step 2/5. In terms of biological role, catalyzes the transfer of the phosphoribosyl group of 5-phosphorylribose-1-pyrophosphate (PRPP) to anthranilate to yield N-(5'-phosphoribosyl)-anthranilate (PRA). In Anaeromyxobacter sp. (strain Fw109-5), this protein is Anthranilate phosphoribosyltransferase.